A 118-amino-acid polypeptide reads, in one-letter code: Beta-2-microglobulin (118 aa).

A signal peptide spans 1–20 (MAPLVALVLLGLLSLSGLDA). One can recognise an Ig-like C1-type domain in the interval 25–112 (PKVQVYSRHP…HVTLDKPKIV (88 aa)). C45 and C99 are disulfide-bonded.

The protein belongs to the beta-2-microglobulin family. Heterodimer of an alpha chain and a beta chain. Beta-2-microglobulin is the beta-chain of major histocompatibility complex class I molecules.

The protein localises to the secreted. Component of the class I major histocompatibility complex (MHC). Involved in the presentation of peptide antigens to the immune system. The sequence is that of Beta-2-microglobulin (B2M) from Sus scrofa (Pig).